Here is a 22-residue protein sequence, read N- to C-terminus: Piscidin-3 (22 aa).

The residue at position 22 (G22) is a Glycine amide.

This sequence belongs to the pleurocidin family. Mast cells in gill, skin and gut, and in lining blood vessels in the viscera.

Its subcellular location is the secreted. The protein localises to the membrane. Antimicrobial peptide with broad-spectrum activity against Gram-positive and Gram-negative bacteria. Rapidly inactivates both channel catfish herpesvirus (ED(50)=11 uM) and frog virus 3 (ED(50)=16 uM) over a wide temperature range. Has hemolytic activity. In Morone chrysops x Morone saxatilis (White bass x Striped bass), this protein is Piscidin-3.